The primary structure comprises 843 residues: Transmembrane protease serine 7 (843 aa).

Residues 1 to 76 (MDKENSDVSA…KVPFWNVQNK (76 aa)) are Cytoplasmic-facing. The segment at 27 to 67 (AQKKLPVRRPPLPGRRLPLPGRRPPQRPIGKAKPKKQSKKK) is disordered. Positions 56–67 (GKAKPKKQSKKK) are enriched in basic residues. Residues 77–97 (IILFTVFLFILAVIAWTLLWL) form a helical; Signal-anchor for type II membrane protein membrane-spanning segment. Residues 98 to 843 (YISKTESKDA…WIHKYVPSLL (746 aa)) lie on the Extracellular side of the membrane. The 129-residue stretch at 106 to 234 (DAFYFAGMFR…DSVVLNAGLR (129 aa)) folds into the SEA domain. Intrachain disulfides connect Cys247–Cys273, Cys299–Cys322, Cys365–Cys396, Cys484–Cys496, Cys491–Cys509, Cys503–Cys518, Cys525–Cys544, Cys538–Cys553, Cys559–Cys571, Cys566–Cys585, Cys579–Cys594, and Cys631–Cys647. 2 consecutive CUB domains span residues 247-360 (CSQY…FEVI) and 365-481 (CENT…YNIS). LDL-receptor class A domains follow at residues 483–519 (PCPV…LFCV), 517–554 (FCVS…QNCT), and 558–595 (PCNN…EGCT). A Peptidase S1 domain is found at 606–840 (IIGGTDTLEG…FVPWIHKYVP (235 aa)). Catalysis depends on charge relay system residues His646 and Asp694. 2 disulfides stabilise this stretch: Cys730-Cys796 and Cys762-Cys775. Ser790 (charge relay system) is an active-site residue.

This sequence belongs to the peptidase S1 family. Forms a heterodimer with SERPINA5. Post-translationally, N-glycosylated. Expressed in brain, ovary, testis, salivary gland, trachea and lung.

The protein resides in the cell membrane. Functionally, serine protease which preferentially hydrolyzes peptides with Arg at the P1 position. This chain is Transmembrane protease serine 7 (TMPRSS7), found in Homo sapiens (Human).